Consider the following 429-residue polypeptide: Enolase (429 aa).

Residue Gln-164 participates in (2R)-2-phosphoglycerate binding. The active-site Proton donor is the Glu-206. Positions 243, 286, and 313 each coordinate Mg(2+). (2R)-2-phosphoglycerate is bound by residues Lys-338, Arg-367, Ser-368, and Lys-389. Residue Lys-338 is the Proton acceptor of the active site.

This sequence belongs to the enolase family. In terms of assembly, homooctamer. Forms a ring-shaped particle. Mg(2+) is required as a cofactor.

It is found in the cytoplasm. The protein localises to the secreted. The protein resides in the cell surface. The catalysed reaction is (2R)-2-phosphoglycerate = phosphoenolpyruvate + H2O. It participates in carbohydrate degradation; glycolysis; pyruvate from D-glyceraldehyde 3-phosphate: step 4/5. With respect to regulation, inhibited by fluoride and phosphate. In terms of biological role, catalyzes the reversible conversion of 2-phosphoglycerate (2-PG) into phosphoenolpyruvate (PEP). It is essential for the degradation of carbohydrates via glycolysis. The polypeptide is Enolase (Thermotoga maritima (strain ATCC 43589 / DSM 3109 / JCM 10099 / NBRC 100826 / MSB8)).